The primary structure comprises 155 residues: Deoxyuridine 5'-triphosphate nucleotidohydrolase (155 aa).

Substrate is bound by residues 71–73 (RSG), Asn-84, 88–90 (TID), and Lys-98.

This sequence belongs to the dUTPase family. Mg(2+) is required as a cofactor.

It catalyses the reaction dUTP + H2O = dUMP + diphosphate + H(+). Its pathway is pyrimidine metabolism; dUMP biosynthesis; dUMP from dCTP (dUTP route): step 2/2. Its function is as follows. This enzyme is involved in nucleotide metabolism: it produces dUMP, the immediate precursor of thymidine nucleotides and it decreases the intracellular concentration of dUTP so that uracil cannot be incorporated into DNA. The protein is Deoxyuridine 5'-triphosphate nucleotidohydrolase of Corynebacterium jeikeium (strain K411).